The sequence spans 508 residues: Light-independent protochlorophyllide reductase subunit B (508 aa).

D36 lines the [4Fe-4S] cluster pocket. The active-site Proton donor is D294. A substrate-binding site is contributed by 429 to 430 (GM).

The protein belongs to the ChlB/BchB/BchZ family. In terms of assembly, protochlorophyllide reductase is composed of three subunits; ChlL, ChlN and ChlB. Forms a heterotetramer of two ChlB and two ChlN subunits. Requires [4Fe-4S] cluster as cofactor.

Its subcellular location is the plastid. It is found in the chloroplast. The catalysed reaction is chlorophyllide a + oxidized 2[4Fe-4S]-[ferredoxin] + 2 ADP + 2 phosphate = protochlorophyllide a + reduced 2[4Fe-4S]-[ferredoxin] + 2 ATP + 2 H2O. Its pathway is porphyrin-containing compound metabolism; chlorophyll biosynthesis (light-independent). In terms of biological role, component of the dark-operative protochlorophyllide reductase (DPOR) that uses Mg-ATP and reduced ferredoxin to reduce ring D of protochlorophyllide (Pchlide) to form chlorophyllide a (Chlide). This reaction is light-independent. The NB-protein (ChlN-ChlB) is the catalytic component of the complex. The chain is Light-independent protochlorophyllide reductase subunit B from Pyropia yezoensis (Susabi-nori).